The chain runs to 372 residues: NAD(P)H-quinone oxidoreductase subunit 1 (372 aa).

The next 8 membrane-spanning stretches (helical) occupy residues 31–51 (PLPM…VVWL), 65–85 (PEFI…KLVL), 97–117 (LLFT…YLIL), 128–148 (VGLG…GLLM), 176–196 (LALS…VDIV), 254–276 (FALF…AVLY), 304–324 (LIFA…LIFL), and 347–367 (FLLP…LAFP).

Belongs to the complex I subunit 1 family. In terms of assembly, NDH-1 is composed of at least 11 different subunits.

It is found in the cellular thylakoid membrane. It catalyses the reaction a plastoquinone + NADH + (n+1) H(+)(in) = a plastoquinol + NAD(+) + n H(+)(out). The enzyme catalyses a plastoquinone + NADPH + (n+1) H(+)(in) = a plastoquinol + NADP(+) + n H(+)(out). Functionally, NDH-1 shuttles electrons from an unknown electron donor, via FMN and iron-sulfur (Fe-S) centers, to quinones in the respiratory and/or the photosynthetic chain. The immediate electron acceptor for the enzyme in this species is believed to be plastoquinone. Couples the redox reaction to proton translocation, and thus conserves the redox energy in a proton gradient. The protein is NAD(P)H-quinone oxidoreductase subunit 1 of Leptolyngbya boryana (Plectonema boryanum).